We begin with the raw amino-acid sequence, 764 residues long: Acylamino-acid-releasing enzyme (764 aa).

Active-site charge relay system residues include S618, D707, and H739.

It belongs to the peptidase S9C family. As to quaternary structure, homotetramer.

The protein resides in the cytoplasm. Its subcellular location is the nucleus. The enzyme catalyses Cleavage of an N-acetyl or N-formyl amino acid from the N-terminus of a polypeptide.. Its activity is regulated as follows. Strongly inhibited by the serine protease inhibitor diisopropyl fluorophosphate. In terms of biological role, catalyzes the hydrolysis of the N-terminal peptide bond of an N-acetylated peptide to generate an N-acetylated amino acid and a peptide with a free N-terminus. Can degrade the glycated RuBisCO (ribulose-1,5-bisphosphate carboxylase/oxygenase) protein but not the native protein. May be involved in the elimination of glycated proteins. Plays a homeostatic role in sustaining the cytoplasmic antioxidative system. May contribute to the elimination of the oxidized proteins in the cytoplasm. This is Acylamino-acid-releasing enzyme from Arabidopsis thaliana (Mouse-ear cress).